We begin with the raw amino-acid sequence, 399 residues long: Tryptophan synthase beta chain (399 aa).

Residue Lys-86 is modified to N6-(pyridoxal phosphate)lysine.

This sequence belongs to the TrpB family. In terms of assembly, tetramer of two alpha and two beta chains. The cofactor is pyridoxal 5'-phosphate.

It carries out the reaction (1S,2R)-1-C-(indol-3-yl)glycerol 3-phosphate + L-serine = D-glyceraldehyde 3-phosphate + L-tryptophan + H2O. It functions in the pathway amino-acid biosynthesis; L-tryptophan biosynthesis; L-tryptophan from chorismate: step 5/5. The beta subunit is responsible for the synthesis of L-tryptophan from indole and L-serine. The polypeptide is Tryptophan synthase beta chain (trpB) (Buchnera aphidicola subsp. Schizaphis graminum (strain Sg)).